A 328-amino-acid chain; its full sequence is Tetraacyldisaccharide 4'-kinase (328 aa).

55–62 contacts ATP; it reads TAGGNGKT.

This sequence belongs to the LpxK family.

It carries out the reaction a lipid A disaccharide + ATP = a lipid IVA + ADP + H(+). It functions in the pathway glycolipid biosynthesis; lipid IV(A) biosynthesis; lipid IV(A) from (3R)-3-hydroxytetradecanoyl-[acyl-carrier-protein] and UDP-N-acetyl-alpha-D-glucosamine: step 6/6. Functionally, transfers the gamma-phosphate of ATP to the 4'-position of a tetraacyldisaccharide 1-phosphate intermediate (termed DS-1-P) to form tetraacyldisaccharide 1,4'-bis-phosphate (lipid IVA). The protein is Tetraacyldisaccharide 4'-kinase of Escherichia coli O127:H6 (strain E2348/69 / EPEC).